Consider the following 97-residue polypeptide: Putative pterin-4-alpha-carbinolamine dehydratase (97 aa).

This sequence belongs to the pterin-4-alpha-carbinolamine dehydratase family.

The catalysed reaction is (4aS,6R)-4a-hydroxy-L-erythro-5,6,7,8-tetrahydrobiopterin = (6R)-L-erythro-6,7-dihydrobiopterin + H2O. The polypeptide is Putative pterin-4-alpha-carbinolamine dehydratase (Christiangramia forsetii (strain DSM 17595 / CGMCC 1.15422 / KT0803) (Gramella forsetii)).